The following is a 713-amino-acid chain: MSQSSRLSALPIFQASLSASQSPRYIFSSQNGTRIVFIQDNIIRWYNVLTDSLYHSLNFSRHLVLDDTFHVISSTSGDLLCLFNDNEIFVMEVPWGYSNVEDVSIQDAFQIFHYSIDEEEVGPKSSIKKVLFHPKSYRDSCIVVLKEDDTITMFDILNSQEKPIVLNKPNNSFGLDARVNDITDLEFSKDGLTLYCLNTTEGGDIFAFYPFLPSVLLLNEKDLNLILNKSLVMYESLDSTTDVIVKRNVIKQLQFVSKLHENWNSRFGKVDIQKEYRLAKVQGPFTINPFPGELYDYTATNIATILIDNGQNEIVCVSFDDGSLILLFKDLEMSMSWDVDNYVYNNSLVLIERVKLQREIKSLITLPEQLGKLYVISDNIIQQVNFMSWASTLSKCINESDLNPLAGLKFESKLEDIATIERIPNLAYINWNDQSNLALMSNKTLTFQNISSDMKPQSTAAETSISTEKSDTVGDGFKMSFTQPINEILILNDNFQKACISPCERIIPSADRQIPLKNEASENQLEIFTDISKEFLQRIVKAQTLGVSIHNRIHEQQFELTRQLQSTCKIISKDDDLRRKFEAQNKKWDAQLSRQSELMERFSKLSKKLSQIAESNKFKEKKISHGEMKWFKEIRNQILQFNSFVHSQKSLQQDLSYLKSELTRIEAETIKVDKKSQNEWDELRKMLEIDSKIIKECNEELLQVSQEFTTKTQ.

The interval 1 to 409 is interaction with NUP116; that stretch reads MSQSSRLSAL…SDLNPLAGLK (409 aa). The interaction with NSP1 and NUP159 stretch occupies residues 463–713; it reads TSISTEKSDT…VSQEFTTKTQ (251 aa). A coiled-coil region spans residues 582–713; the sequence is EAQNKKWDAQ…VSQEFTTKTQ (132 aa). The short motif at 607-623 is the Bipartite nuclear localization signal element; sequence KKLSQIAESNKFKEKKI.

As to quaternary structure, component of the nuclear pore complex (NPC). NPC constitutes the exclusive means of nucleocytoplasmic transport. NPCs allow the passive diffusion of ions and small molecules and the active, nuclear transport receptor-mediated bidirectional transport of macromolecules such as proteins, RNAs, ribonucleoparticles (RNPs), and ribosomal subunits across the nuclear envelope. Due to its 8-fold rotational symmetry, all subunits are present with 8 copies or multiples thereof. NUP82 is part of the NUP82 subcomplex. This subcomplex is the base for interactions with NUP116 and GLE2, with NUP42 and GLE1 and with DYN2.

The protein resides in the nucleus. It is found in the nuclear pore complex. Its subcellular location is the nucleus membrane. Its function is as follows. Functions as a component of the nuclear pore complex (NPC). NPC components, collectively referred to as nucleoporins (NUPs), can play the role of both NPC structural components and of docking or interaction partners for transiently associated nuclear transport factors. It is specifically involved as part of the NUP82-NUP159-NSP1 subcomplex in nuclear mRNA and pre-ribosome export by acting as a linker tethering nucleoporins that are directly involved in nuclear transport to the NPC via its coiled-coil domain. The protein is Nucleoporin NUP82 (NUP82) of Saccharomyces cerevisiae (strain ATCC 204508 / S288c) (Baker's yeast).